Reading from the N-terminus, the 297-residue chain is Ribosomal RNA small subunit methyltransferase A (297 aa).

Residues Asn31, Leu33, Gly58, Glu79, Asp104, and Asn129 each coordinate S-adenosyl-L-methionine.

Belongs to the class I-like SAM-binding methyltransferase superfamily. rRNA adenine N(6)-methyltransferase family. RsmA subfamily.

It is found in the cytoplasm. The enzyme catalyses adenosine(1518)/adenosine(1519) in 16S rRNA + 4 S-adenosyl-L-methionine = N(6)-dimethyladenosine(1518)/N(6)-dimethyladenosine(1519) in 16S rRNA + 4 S-adenosyl-L-homocysteine + 4 H(+). Specifically dimethylates two adjacent adenosines (A1518 and A1519) in the loop of a conserved hairpin near the 3'-end of 16S rRNA in the 30S particle. May play a critical role in biogenesis of 30S subunits. The chain is Ribosomal RNA small subunit methyltransferase A from Staphylococcus aureus (strain Mu3 / ATCC 700698).